Reading from the N-terminus, the 78-residue chain is Cytochrome c oxidase subunit 8, mitochondrial (78 aa).

Residues 1 to 27 (MLCQQMIRTTAKRSSNIMTRPIIMKRS) constitute a mitochondrion transit peptide. Over 28–51 (VHFKDGVYENIPFKVKGRKTPYAL) the chain is Mitochondrial matrix. A helical transmembrane segment spans residues 52 to 73 (SHFGFFAIGFAVPFVACYVQLK). Position 74 (Lys74) is a topological domain, mitochondrial intermembrane. Residues 75–78 (SGAF) constitute a propeptide that is removed on maturation.

The protein belongs to the cytochrome c oxidase VIIc family. Component of the cytochrome c oxidase (complex IV, CIV), a multisubunit enzyme composed of 12 subunits. The complex is composed of a catalytic core of 3 subunits COX1, COX2 and COX3, encoded in the mitochondrial DNA, and 9 supernumerary subunits COX4, COX5A (or COX5B), COX6, COX7, COX8, COX9, COX12, COX13 and COX26, which are encoded in the nuclear genome. The complex exists as a monomer or a dimer and forms supercomplexes (SCs) in the inner mitochondrial membrane with a dimer of ubiquinol-cytochrome c oxidoreductase (cytochrome b-c1 complex, complex III, CIII), resulting in 2 different assemblies (supercomplexes III(2)IV and III(2)IV(2)).

Its subcellular location is the mitochondrion inner membrane. The protein operates within energy metabolism; oxidative phosphorylation. In terms of biological role, component of the cytochrome c oxidase, the last enzyme in the mitochondrial electron transport chain which drives oxidative phosphorylation. The respiratory chain contains 3 multisubunit complexes succinate dehydrogenase (complex II, CII), ubiquinol-cytochrome c oxidoreductase (cytochrome b-c1 complex, complex III, CIII) and cytochrome c oxidase (complex IV, CIV), that cooperate to transfer electrons derived from NADH and succinate to molecular oxygen, creating an electrochemical gradient over the inner membrane that drives transmembrane transport and the ATP synthase. Cytochrome c oxidase is the component of the respiratory chain that catalyzes the reduction of oxygen to water. Electrons originating from reduced cytochrome c in the intermembrane space (IMS) are transferred via the dinuclear copper A center (CU(A)) of COX2 and heme A of COX1 to the active site in COX1, a binuclear center (BNC) formed by heme A3 and copper B (CU(B)). The BNC reduces molecular oxygen to 2 water molecules using 4 electrons from cytochrome c in the IMS and 4 protons from the mitochondrial matrix. This Saccharomyces cerevisiae (strain ATCC 204508 / S288c) (Baker's yeast) protein is Cytochrome c oxidase subunit 8, mitochondrial (COX8).